We begin with the raw amino-acid sequence, 627 residues long: Hemocyanin D chain (627 aa).

Residues His-171, His-175, His-202, His-322, His-326, and His-362 each coordinate Cu cation. An N-linked (GlcNAc...) asparagine glycan is attached at Asn-445. A disulfide bridge links Cys-531 with Cys-579.

The protein belongs to the tyrosinase family. Hemocyanin subfamily. As to quaternary structure, tarantula hemocyanin is a 24-chain polymer with seven different chains identified. As to expression, hemolymph.

The protein localises to the secreted. Its subcellular location is the extracellular space. Its function is as follows. Hemocyanins are copper-containing oxygen carriers occurring freely dissolved in the hemolymph of many mollusks and arthropods. This Aphonopelma sp. (American tarantula) protein is Hemocyanin D chain (HCD).